Reading from the N-terminus, the 154-residue chain is Large-conductance mechanosensitive channel (154 aa).

3 helical membrane-spanning segments follow: residues 16–36 (VLGL…ISSV), 39–59 (DLLM…GFFI), and 89–109 (GQFL…FMIM).

The protein belongs to the MscL family. Homopentamer.

Its subcellular location is the cell inner membrane. Channel that opens in response to stretch forces in the membrane lipid bilayer. May participate in the regulation of osmotic pressure changes within the cell. The protein is Large-conductance mechanosensitive channel of Zymomonas mobilis subsp. mobilis (strain ATCC 31821 / ZM4 / CP4).